Here is a 514-residue protein sequence, read N- to C-terminus: Maturase K (514 aa).

Belongs to the intron maturase 2 family. MatK subfamily.

Its subcellular location is the plastid. It localises to the chloroplast. Usually encoded in the trnK tRNA gene intron. Probably assists in splicing its own and other chloroplast group II introns. This Encephalartos altensteinii (Altenstein's bread tree) protein is Maturase K.